Reading from the N-terminus, the 397-residue chain is ATP-dependent RNA helicase RhlB (397 aa).

Positions 9-37 (TRFHDFNLAPSLMHAIHDLGFPYCTPIQA) match the Q motif motif. A Helicase ATP-binding domain is found at 40-220 (LGFTLRGQDA…KQWTVDPAIV (181 aa)). 53-60 (AQTGTGKT) serves as a coordination point for ATP. Residues 166 to 169 (DEAD) carry the DEAD box motif. The Helicase C-terminal domain occupies 243 to 393 (DKYKLLYNLV…MPPAELLKPV (151 aa)).

This sequence belongs to the DEAD box helicase family. RhlB subfamily. As to quaternary structure, component of the RNA degradosome, which is a multiprotein complex involved in RNA processing and mRNA degradation.

The protein resides in the cytoplasm. It catalyses the reaction ATP + H2O = ADP + phosphate + H(+). Its function is as follows. DEAD-box RNA helicase involved in RNA degradation. Has RNA-dependent ATPase activity and unwinds double-stranded RNA. This Pseudomonas aeruginosa (strain UCBPP-PA14) protein is ATP-dependent RNA helicase RhlB.